Reading from the N-terminus, the 433-residue chain is Arrestin domain-containing protein 1 (433 aa).

2 disordered regions span residues 296–322 (GLGL…AEAA) and 349–372 (LSSV…PLHP). The span at 301 to 312 (PGAPPLVVPSAP) shows a compositional bias: pro residues. 2 short sequence motifs (PPxY motif) span residues 402–405 (PPEY) and 415–418 (PPSY).

The protein belongs to the arrestin family. Interacts (via PPxY motifs) with ITCH (via WW domains); the interaction is direct and participates in the recruitment of the ubiquitin-protein ligase ITCH to the NOTCH1 receptor. Interacts with ARRB1 and ARRB2; the interaction is direct. Interacts with TSG101; may recruit TSG101 to the plasma membrane. Interacts (via PPxY motifs) with WWP2 (via WW domains); ubiquitinates ARRDC1. Interacts with SLC11A2; controls the incorporation of SLC11A2 into extracellular vesicles through an ubiquitination-dependent mechanism. Interacts with WWP1 (via WW domains). Interacts with NEDD4 (via WW domains). Interacts with PDCD6IP. In terms of processing, ubiquitinated. Ubiquitination by WWP2; promotes localization to extracellular microvesicles. Ubiquitinated by WWP1.

The protein localises to the cell membrane. Functions as an adapter recruiting ubiquitin-protein ligases to their specific substrates. Through an ubiquitination-dependent mechanism plays for instance a role in the incorporation of SLC11A2 into extracellular vesicles. More generally, plays a role in the extracellular transport of proteins between cells through the release in the extracellular space of microvesicles. By participating in the ITCH-mediated ubiquitination and subsequent degradation of NOTCH1, negatively regulates the NOTCH signaling pathway. In Homo sapiens (Human), this protein is Arrestin domain-containing protein 1.